The sequence spans 417 residues: MPLYEGLGSGGEKTAVVIDLGEAFTKCGFAGETGPRCIIPSVIKRAGMSKPIKVVQYNINTEELYSYLKEFIHILYFRHLLVNPRDRRVVVIESVLCPSHFRETLTRVLFKYFEVPSVLLAPSHLMALLTLGINSAMVLDCGYRESLVLPIYEGIPILNCWGALPLGGKALHKELETQLLEQCTVDTGAAKGQSLPSVMGSVPEGVLEDIKVRTCFVSDLKRGLQIQAAKFNIDGNNERPTPPPNVDYPLDGEKILHVLGSIRDSVVEILFEQDNEEKSVATLILDSLLQCPIDTRKQLAENLVIIGGTSMLPGFLHRLLAEIRYLVEKPKYKKTLGTKNFRIHTPPAKANCVAWLGGAVFGALQDILGSRSISKEYYNQTGRIPDWCSLNNPPLEMMFDVGKAQPPLMKRAFSTEK.

Belongs to the actin family. Subunit of dynactin, a multiprotein complex part of a tripartite complex with dynein and a adapter, such as BICDL1, BICD2 or HOOK3. The dynactin complex is built around ACTR1A/ACTB filament and consists of an actin-related filament composed of a shoulder domain, a pointed end and a barbed end. Its length is defined by its flexible shoulder domain. The soulder is composed of 2 DCTN1 subunits, 4 DCTN2 and 2 DCTN3. The 4 DCNT2 (via N-terminus) bind the ACTR1A filament and act as molecular rulers to determine the length. The pointed end is important for binding dynein-dynactin cargo adapters. Consists of 4 subunits: ACTR10, DCNT4, DCTN5 and DCTN6. The barbed end is composed of a CAPZA1:CAPZB heterodimers, which binds ACTR1A/ACTB filament and dynactin and stabilizes dynactin.

The protein resides in the cytoplasm. It is found in the cytoskeleton. In terms of biological role, part of the dynactin complex that activates the molecular motor dynein for ultra-processive transport along microtubules. The sequence is that of Actin-related protein 10 (Actr10) from Mus musculus (Mouse).